The following is a 1084-amino-acid chain: Siderophore biosynthesis regulatory protein URBS1 (1084 aa).

3 disordered regions span residues 1–164 (MALP…QSSS), 245–283 (AEEH…RDSY), and 300–337 (RPVH…AGMR). Residues 23-51 (QAAAASSSSSSSSSHHPPPRIAARPIAPA) show a composition bias toward low complexity. Composition is skewed to polar residues over residues 97–106 (SHHNASSTAT) and 128–141 (RSQS…NRSQ). A compositionally biased stretch (low complexity) spans 150–164 (PSRSQPNSPLLQSSS). Residues 245 to 260 (AEEHAKMQRYSDEHPR) show a composition bias toward basic and acidic residues. The GATA-type 1 zinc-finger motif lies at 338-362 (CSNCGVTSTPLWRRAPDGSTICNAC). Disordered stretches follow at residues 372–405 (HRSA…REDD) and 442–472 (VSKR…KMDD). The segment covering 373-385 (RSASNRLSGSDAS) has biased composition (polar residues). Residues 482 to 506 (CTNCQTTTTPLWRRDEDGNNICNAC) form a GATA-type 2 zinc finger. Disordered regions lie at residues 559–595 (IAPA…MREA), 643–679 (RAGA…DERD), 692–803 (THAA…TKLS), 841–940 (EAAG…SRRN), 953–1019 (AAVP…DDHW), and 1040–1084 (ARPV…APRT). 2 stretches are compositionally biased toward basic and acidic residues: residues 650–659 (RTSHPDDSRS) and 715–725 (RLGRSELHGES). The segment covering 752 to 781 (PHHHHHHHHHHANHASHAVHHGHHHHHHHP) has biased composition (basic residues). Residues 875–888 (RGTRSGHDSIKQEA) are compositionally biased toward basic and acidic residues. Residues 961–970 (SPPSTVSNPA) are compositionally biased toward polar residues. The span at 1070–1084 (PVASSPSQAVSAPRT) shows a compositional bias: low complexity.

It localises to the nucleus. Involved in the regulation of secreted ferrichrome-type siderophores. Acts directly or indirectly to repress the biosynthesis of siderophores. The chain is Siderophore biosynthesis regulatory protein URBS1 (URBS1) from Mycosarcoma maydis (Corn smut fungus).